Here is a 314-residue protein sequence, read N- to C-terminus: DNA-directed RNA polymerase subunit alpha (314 aa).

The interval 1–228 (MAQFQIECVE…NLFIPLKDLN (228 aa)) is alpha N-terminal domain (alpha-NTD). An alpha C-terminal domain (alpha-CTD) region spans residues 243–314 (PESQIPIEEL…ITLPHEKAKA (72 aa)).

Belongs to the RNA polymerase alpha chain family. Homodimer. In cyanobacteria the RNAP catalytic core is composed of 2 alpha, 1 beta, 1 beta', 1 gamma and 1 omega subunit. When a sigma factor is associated with the core the holoenzyme is formed, which can initiate transcription.

It catalyses the reaction RNA(n) + a ribonucleoside 5'-triphosphate = RNA(n+1) + diphosphate. Functionally, DNA-dependent RNA polymerase catalyzes the transcription of DNA into RNA using the four ribonucleoside triphosphates as substrates. In Synechocystis sp. (strain ATCC 27184 / PCC 6803 / Kazusa), this protein is DNA-directed RNA polymerase subunit alpha.